Consider the following 1264-residue polypeptide: Protein fantom (1264 aa).

Coiled-coil stretches lie at residues 64 to 143 (LKQH…LQVQ), 196 to 268 (YSNS…NVET), 299 to 454 (LRIS…ESDI), and 488 to 555 (NKDL…VHLL). C2 domains lie at 577-714 (KQYK…FCTT) and 773-897 (AATT…SGIF). Disordered stretches follow at residues 979 to 1018 (DTISHPSPETSPPPKDIKDSSPEVGPKPENGLSAVAYPSK) and 1047 to 1093 (QLAS…NTKQ). The segment covering 1056–1080 (SEDETEITEELEPEDEDRSASDSDD) has biased composition (acidic residues).

It belongs to the RPGRIP1 family. Interacts with NPHP4 and NPHP1; NPHP1, NPHP4 and RPGRIP1L are proposed to form a functional NPHP1-4-8 module localized to cell-cell contacts and the ciliary transition zone; NPHP4 mediates the interaction between NPHP1 and RPGRIP1L. Interacts with IQCB1; the interaction likely requires additional interactors. Interacts with TBXA2R (via C-terminus), RPGR, NEK4. Interacts with NPHP4, INVS and DVL2; proposed to form a complex involved in DVL2 stabilization. Interacts with PSMD2. In terms of tissue distribution, ubiquitously expressed. Not found in heart and skin.

The protein resides in the cytoplasm. It is found in the cytoskeleton. It localises to the cilium basal body. The protein localises to the cilium axoneme. Its subcellular location is the microtubule organizing center. The protein resides in the centrosome. It is found in the cell junction. It localises to the tight junction. Negatively regulates signaling through the G-protein coupled thromboxane A2 receptor (TBXA2R). May be involved in mechanisms like programmed cell death, craniofacial development, patterning of the limbs, and formation of the left-right axis. Involved in the organization of apical junctions; the function is proposed to implicate a NPHP1-4-8 module. Does not seem to be strictly required for ciliogenesis. Involved in establishment of planar cell polarity such as in cochlear sensory epithelium and is proposed to implicate stabilization of disheveled proteins. Involved in regulation of proteasomal activity at the primary cilium probably implicating association with PSDM2. This chain is Protein fantom (Rpgrip1l), found in Mus musculus (Mouse).